Reading from the N-terminus, the 127-residue chain is PRA1 family protein C (127 aa).

The next 3 membrane-spanning stretches (helical) occupy residues 15-35 (IFIS…LIVA), 53-73 (VIDD…IFLL), and 76-96 (VSRG…VHGM).

Belongs to the PRA1 family.

Its subcellular location is the endoplasmic reticulum membrane. Functionally, may be involved in both secretory and endocytic intracellular trafficking in the endosomal/prevacuolar compartments. The sequence is that of PRA1 family protein C (PRA1C) from Arabidopsis thaliana (Mouse-ear cress).